We begin with the raw amino-acid sequence, 262 residues long: Phosphonates import ATP-binding protein PhnC (262 aa).

The ABC transporter domain occupies 5–253 (IRVEKLAKTF…RFDHLYRSIN (249 aa)). 37-44 (GPSGSGKS) is an ATP binding site.

It belongs to the ABC transporter superfamily. Phosphonates importer (TC 3.A.1.9.1) family. As to quaternary structure, the complex is composed of two ATP-binding proteins (PhnC), two transmembrane proteins (PhnE) and a solute-binding protein (PhnD).

The protein localises to the cell inner membrane. It catalyses the reaction phosphonate(out) + ATP + H2O = phosphonate(in) + ADP + phosphate + H(+). In terms of biological role, part of the ABC transporter complex PhnCDE involved in phosphonates import. Responsible for energy coupling to the transport system. The chain is Phosphonates import ATP-binding protein PhnC from Escherichia coli O6:H1 (strain CFT073 / ATCC 700928 / UPEC).